We begin with the raw amino-acid sequence, 452 residues long: NADH-ubiquinone oxidoreductase chain 4 (452 aa).

14 helical membrane passes run 4–24, 29–49, 59–79, 88–110, 114–136, 144–164, 182–202, 221–241, 252–272, 282–304, 309–331, 345–365, 390–410, and 432–452; these read LVLGYVGLVIGVIVTKKSMVW, VGSVLLMLPATVLVNMNMTIS, FVSLGLTVLSIWLLPLMLLAS, LIYQRVFVGCQVFLTGALVLAFM, LLLFYIAFESTLLPTLMLITRWG, AGTYFMFFTLVGSLPLLICLI, VFQLSYLVNFWWVGCILAFLV, PIAGSMVLAGVLLKLGGYGMM, MLSSEVFLALALWGIVVMGGI, LIAYSSVGHMALVVGGVLTGVAW, AMVLMIAHGLVSSCLFCLANLWY, LIMIFPLISLGWFLMSLMNMA, IVYMSLGAVLTAAYSLYLFGM, and LLTTLHLVPAIYLIFYLGLMF.

Belongs to the complex I subunit 4 family.

Its subcellular location is the mitochondrion membrane. It carries out the reaction a ubiquinone + NADH + 5 H(+)(in) = a ubiquinol + NAD(+) + 4 H(+)(out). Its function is as follows. Core subunit of the mitochondrial membrane respiratory chain NADH dehydrogenase (Complex I) that is believed to belong to the minimal assembly required for catalysis. Complex I functions in the transfer of electrons from NADH to the respiratory chain. The immediate electron acceptor for the enzyme is believed to be ubiquinone. The chain is NADH-ubiquinone oxidoreductase chain 4 (ND4) from Branchiostoma lanceolatum (Common lancelet).